Here is a 126-residue protein sequence, read N- to C-terminus: Aspartate 1-decarboxylase (126 aa).

Ser-25 serves as the catalytic Schiff-base intermediate with substrate; via pyruvic acid. Residue Ser-25 is modified to Pyruvic acid (Ser). Thr-57 serves as a coordination point for substrate. Tyr-58 functions as the Proton donor in the catalytic mechanism. Substrate is bound at residue 73–75 (GAA).

Belongs to the PanD family. In terms of assembly, heterooctamer of four alpha and four beta subunits. The cofactor is pyruvate. In terms of processing, is synthesized initially as an inactive proenzyme, which is activated by self-cleavage at a specific serine bond to produce a beta-subunit with a hydroxyl group at its C-terminus and an alpha-subunit with a pyruvoyl group at its N-terminus.

Its subcellular location is the cytoplasm. The enzyme catalyses L-aspartate + H(+) = beta-alanine + CO2. Its pathway is cofactor biosynthesis; (R)-pantothenate biosynthesis; beta-alanine from L-aspartate: step 1/1. Functionally, catalyzes the pyruvoyl-dependent decarboxylation of aspartate to produce beta-alanine. This is Aspartate 1-decarboxylase from Nitrosococcus oceani (strain ATCC 19707 / BCRC 17464 / JCM 30415 / NCIMB 11848 / C-107).